A 216-amino-acid polypeptide reads, in one-letter code: Thiosulfate dehydrogenase electron acceptor (216 aa).

An N-terminal signal peptide occupies residues methionine 1–alanine 22. Cytochrome c domains lie at alanine 23–proline 108 and serine 118–glycine 210. 6 residues coordinate heme c: cysteine 41, cysteine 44, histidine 45, cysteine 141, cysteine 144, and histidine 145.

Binds 2 heme c groups covalently per subunit.

Functionally, acts as an electron acceptor for the thiosulfate dehydrogenase TsdA. The polypeptide is Thiosulfate dehydrogenase electron acceptor (tsdB) (Stutzerimonas stutzeri (strain A1501) (Pseudomonas stutzeri)).